A 502-amino-acid polypeptide reads, in one-letter code: Nondiscriminating glutamyl-tRNA synthetase EARS2, mitochondrial (502 aa).

A mitochondrion-targeting transit peptide spans 1–20; it reads MAGMLREVCGAAASGLRVRF. 19–21 is a binding site for L-glutamate; the sequence is RFG. Positions 24–32 match the 'HIGH' region motif; the sequence is PTGFLHLGG. H29 provides a ligand contact to ATP. Residues E55, 207-211, and R225 contribute to the L-glutamate site; that span reads YHLAN. Residues E228 and 263–267 contribute to the ATP site; that span reads KLSKR. Residues 263–267 carry the 'KMSKS' region motif; the sequence is KLSKR.

The protein belongs to the class-I aminoacyl-tRNA synthetase family. Glutamate--tRNA ligase type 1 subfamily.

The protein resides in the mitochondrion matrix. It carries out the reaction tRNA(Glx) + L-glutamate + ATP = L-glutamyl-tRNA(Glx) + AMP + diphosphate. It catalyses the reaction tRNA(Glu) + L-glutamate + ATP = L-glutamyl-tRNA(Glu) + AMP + diphosphate. The catalysed reaction is tRNA(Gln) + L-glutamate + ATP = L-glutamyl-tRNA(Gln) + AMP + diphosphate. Non-discriminating glutamyl-tRNA synthetase that catalyzes aminoacylation of both mitochondrial tRNA(Glu) and tRNA(Gln) and participates in RNA aminoacylation for mitochondrial protein translation. Attachs glutamate to tRNA(Glu) or tRNA(Gln) in a two-step reaction: glutamate is first activated by ATP to form Glu-AMP and then transferred to the acceptor end of tRNA(Glu) or tRNA(Gln). This is Nondiscriminating glutamyl-tRNA synthetase EARS2, mitochondrial from Gallus gallus (Chicken).